Here is a 332-residue protein sequence, read N- to C-terminus: SLAM family member 6 (332 aa).

The first 21 residues, M1–S21, serve as a signal peptide directing secretion. Residues Q22–M226 are Extracellular-facing. The 86-residue stretch at G35–S120 folds into the Ig-like V-type domain. N58, N87, N137, N144, N161, N178, and N203 each carry an N-linked (GlcNAc...) asparagine glycan. Residues N132–S209 enclose the Ig-like C2-type domain. Disulfide bonds link C147–C214 and C153–C195. A helical membrane pass occupies residues I227–V247. The Cytoplasmic segment spans residues L248–V331. Y274 bears the Phosphotyrosine mark. Residue S278 is modified to Phosphoserine. Short sequence motifs (ITSM) lie at residues T283 to V288 and T307 to I312. Residue Y309 is modified to Phosphotyrosine.

In terms of assembly, homodimer. Interacts with PTN6. Interacts (phosphorylated) with PTN11. Interacts (phosphorylated on tyrosine residues) with SH2D1A/SAP and SH2D1B/EAT2; SH2D1A and SH2D1B can associate with the same SLAMF6 molecule; interaction with SH2D1B is mediated by ITSM 2. Phosphorylation in NK cells upon engagment by SLAMF6-expressing target cells is leading to receptor activation. As to expression, expressed by all (resting and activated) natural killer cells (NK), T- and B-lymphocytes. Increased surface expression on T-cells of systemic lupus erythematosus (SLE) patients.

It localises to the cell membrane. Functionally, self-ligand receptor of the signaling lymphocytic activation molecule (SLAM) family. SLAM receptors triggered by homo- or heterotypic cell-cell interactions are modulating the activation and differentiation of a wide variety of immune cells and thus are involved in the regulation and interconnection of both innate and adaptive immune response. Activities are controlled by presence or absence of small cytoplasmic adapter proteins, SH2D1A/SAP and/or SH2D1B/EAT-2. Triggers cytolytic activity only in natural killer cells (NK) expressing high surface densities of natural cytotoxicity receptors. Positive signaling in NK cells implicates phosphorylation of VAV1. NK cell activation seems to depend on SH2D1B and not on SH2D1A. In conjunction with SLAMF1 controls the transition between positive selection and the subsequent expansion and differentiation of the thymocytic natural killer T (NKT) cell lineage. Promotes T-cell differentiation into a helper T-cell Th17 phenotype leading to increased IL-17 secretion; the costimulatory activity requires SH2D1A. Promotes recruitment of RORC to the IL-17 promoter. In conjunction with SLAMF1 and CD84/SLAMF5 may be a negative regulator of the humoral immune response. In the absence of SH2D1A/SAP can transmit negative signals to CD4(+) T-cells and NKT cells. Negatively regulates germinal center formation by inhibiting T-cell:B-cell adhesion; the function probably implicates increased association with PTPN6/SHP-1 via ITSMs in absence of SH2D1A/SAP. However, reported to be involved in maintaining B-cell tolerance in germinal centers and in preventing autoimmunity. In Homo sapiens (Human), this protein is SLAM family member 6 (SLAMF6).